The chain runs to 155 residues: MNPVRKKRLFIVLAILAGVGIAVALALSALQQNINLFYTPSQIAAGEAPEGTRIRAGGLVEEGSVKRTNDSLSVAFRVTDGAQAITITYQGILPDLFREGQGIVALGRVNADGVLVADEVLAKHDENYMPPEVTQALEKSGMMKHYEGGKQEYAK.

Residues 1 to 8 (MNPVRKKR) lie on the Cytoplasmic side of the membrane. The chain crosses the membrane as a helical; Signal-anchor for type II membrane protein span at residues 9 to 29 (LFIVLAILAGVGIAVALALSA). Topologically, residues 30 to 155 (LQQNINLFYT…YEGGKQEYAK (126 aa)) are periplasmic. Residues H124 and Y128 each coordinate heme.

It belongs to the CcmE/CycJ family.

The protein resides in the cell inner membrane. Its function is as follows. Heme chaperone required for the biogenesis of c-type cytochromes. Transiently binds heme delivered by CcmC and transfers the heme to apo-cytochromes in a process facilitated by CcmF and CcmH. This is Cytochrome c-type biogenesis protein CcmE from Stutzerimonas stutzeri (strain A1501) (Pseudomonas stutzeri).